A 139-amino-acid polypeptide reads, in one-letter code: Basic phospholipase A2 beta-bungarotoxin A2 chain (139 aa).

The signal sequence occupies residues 1 to 9 (AVCVSLLGA). Positions 10-17 (ANIPPHPF) are excised as a propeptide. Ca(2+) contacts are provided by Tyr-45, Gly-47, and Gly-49. A disulfide bond links Cys-46 and Cys-62. His-65 is an active-site residue. Position 66 (Asp-66) interacts with Ca(2+).

The protein belongs to the phospholipase A2 family. Group I subfamily. D49 sub-subfamily. As to quaternary structure, heterodimer; disulfide-linked. The A chains have phospholipase A2 activity and the B chains show homology with the basic protease inhibitors. Ca(2+) serves as cofactor. As to expression, expressed by the venom gland.

Its subcellular location is the secreted. It carries out the reaction a 1,2-diacyl-sn-glycero-3-phosphocholine + H2O = a 1-acyl-sn-glycero-3-phosphocholine + a fatty acid + H(+). Functionally, snake venom phospholipase A2 (PLA2) that shows presynaptic neurotoxicity. PLA2 catalyzes the calcium-dependent hydrolysis of the 2-acyl groups in 3-sn-phosphoglycerides. This is Basic phospholipase A2 beta-bungarotoxin A2 chain from Bungarus candidus (Malayan krait).